Here is a 556-residue protein sequence, read N- to C-terminus: Small ribosomal subunit protein uS3m (556 aa).

Belongs to the universal ribosomal protein uS3 family. Component of the mitochondrial ribosome small subunit.

The protein localises to the mitochondrion. This Arabidopsis thaliana (Mouse-ear cress) protein is Small ribosomal subunit protein uS3m (RPS3).